Reading from the N-terminus, the 338-residue chain is Plasminogen (338 aa).

The Kringle 5 domain occupies 9–88 (CMLGIGKGYQ…LFDYCDVPQC (80 aa)). Cystine bridges form between C9–C88, C30–C71, C59–C83, C95–C213, C105–C113, C135–C151, C227–C294, C257–C273, and C284–C312. A Peptidase S1 domain is found at 109–336 (IVGGCVAIAH…FINWIERIMQ (228 aa)). The residue at position 125 (S125) is a Phosphoserine. Residues H150 and D193 each act as charge relay system in the active site. The active-site Charge relay system is S288.

This sequence belongs to the peptidase S1 family. Plasminogen subfamily. Interacts with CSPG4 and AMOT. Interacts (via the Kringle domains) with HRG; the interaction tethers PLG to the cell surface and enhances its activation. Interacts (via Kringle 4 domain) with ADA; the interaction stimulates PLG activation when in complex with DPP4. Angiostatin: Interacts with ATP5F1A; the interaction inhibits most of the angiogenic effects of angiostatin.

Its subcellular location is the secreted. It carries out the reaction Preferential cleavage: Lys-|-Xaa &gt; Arg-|-Xaa, higher selectivity than trypsin. Converts fibrin into soluble products.. With respect to regulation, converted into plasmin by plasminogen activators, both plasminogen and its activator being bound to fibrin. Activated with catalytic amounts of streptokinase. Plasmin dissolves the fibrin of blood clots and acts as a proteolytic factor in a variety of other processes including embryonic development, tissue remodeling, tumor invasion, and inflammation. In ovulation, weakens the walls of the Graafian follicle. It activates the urokinase-type plasminogen activator, collagenases and several complement zymogens, such as C1, C4 and C5. Cleavage of fibronectin and laminin leads to cell detachment and apoptosis. Also cleaves fibrin, thrombospondin and von Willebrand factor. Its role in tissue remodeling and tumor invasion may be modulated by CSPG4. Binds to cells. This is Plasminogen (PLG) from Equus caballus (Horse).